Reading from the N-terminus, the 444-residue chain is NADH-ubiquinone oxidoreductase chain 4 (444 aa).

Helical transmembrane passes span 4–24 (YLFMIIFLIPICLLGNCWWLV), 28–48 (IFLLSFIFMISLYSYSDLSMI), 53–73 (GVDFYSFMLILLSLWICCLMI), 87–107 (NFFVFVVLLLLIMLFCSFSSL), 109–129 (LFSFYIFFESSLVPTLFLILG), 141–161 (VYLMFYTLVASLPLLLVLFSI), 173–193 (LIDFGSFYFLFYVFSIFAFLV), 212–232 (PISGSMILAGILLKLGGYGIF), 245–265 (FNYFVLSLSLFGGVIISFVCF), 272–294 (SLIAYSSVAHMSLVICGLMTMNW), 306–326 (GHGISSSGLFCLSNIIYELLG), 330–350 (LLINKGMINLMPSMTIWWFLL), and 373–393 (IISWSSYMILLLIFLSFFSAV).

It belongs to the complex I subunit 4 family.

The protein resides in the mitochondrion membrane. The catalysed reaction is a ubiquinone + NADH + 5 H(+)(in) = a ubiquinol + NAD(+) + 4 H(+)(out). Its function is as follows. Core subunit of the mitochondrial membrane respiratory chain NADH dehydrogenase (Complex I) that is believed to belong to the minimal assembly required for catalysis. Complex I functions in the transfer of electrons from NADH to the respiratory chain. The immediate electron acceptor for the enzyme is believed to be ubiquinone. The polypeptide is NADH-ubiquinone oxidoreductase chain 4 (ND4) (Locusta migratoria (Migratory locust)).